We begin with the raw amino-acid sequence, 438 residues long: AP-2 complex subunit mu (438 aa).

The MHD domain maps to 177–437; that stretch reads KNEVFLDIVE…ITKAGSYEIR (261 aa).

It belongs to the adaptor complexes medium subunit family. As to quaternary structure, adaptor protein complex 2 (AP-2) is a heterotetramer composed of two large adaptins (alpha-type and beta-type subunits), a medium adaptin (mu-type subunit) and a small adaptin (sigma-type subunit).

The protein resides in the cell membrane. The protein localises to the membrane. It is found in the coated pit. It localises to the golgi apparatus. Its subcellular location is the trans-Golgi network membrane. Functionally, subunit of the adaptor protein complex 2 (AP-2). Adaptor protein complexes function in protein transport via transport vesicles in different membrane traffic pathways. Adaptor protein complexes are vesicle coat components and appear to be involved in cargo selection and vesicle formation. AP-2 is involved in clathrin-dependent endocytosis in which cargo proteins are incorporated into vesicles surrounded by clathrin (clathrin-coated vesicles, CCVs) which are destined for fusion with the early endosome. AP-2 recognizes Y-X-X-Phi endocytosis signal motif within the cytosolic tails of transmembrane cargo molecules. The complex binds polyphosphoinositides. In Arabidopsis thaliana (Mouse-ear cress), this protein is AP-2 complex subunit mu (AP2M).